The sequence spans 151 residues: Nucleoside diphosphate kinase (151 aa).

ATP-binding residues include Lys-11, Phe-59, Arg-87, Thr-93, Arg-104, and Asn-114. His-117 acts as the Pros-phosphohistidine intermediate in catalysis.

It belongs to the NDK family. Mg(2+) is required as a cofactor.

The enzyme catalyses a 2'-deoxyribonucleoside 5'-diphosphate + ATP = a 2'-deoxyribonucleoside 5'-triphosphate + ADP. The catalysed reaction is a ribonucleoside 5'-diphosphate + ATP = a ribonucleoside 5'-triphosphate + ADP. Its function is as follows. Major role in the synthesis of nucleoside triphosphates other than ATP. The ATP gamma phosphate is transferred to the NDP beta phosphate via a ping-pong mechanism, using a phosphorylated active-site intermediate. The chain is Nucleoside diphosphate kinase (NDK1) from Eremothecium gossypii (strain ATCC 10895 / CBS 109.51 / FGSC 9923 / NRRL Y-1056) (Yeast).